A 615-amino-acid chain; its full sequence is Extracellular metalloproteinase 1 (615 aa).

An N-terminal signal peptide occupies residues 1 to 8 (SLPLHVLA). A propeptide spanning residues 9–235 (HPQPSTSTSL…VHNVVDYVAH (227 aa)) is cleaved from the precursor. A glycan (N-linked (GlcNAc...) asparagine) is linked at asparagine 276. Histidine 419 serves as a coordination point for Zn(2+). Residue glutamate 420 is part of the active site. Residue histidine 423 coordinates Zn(2+). 3 N-linked (GlcNAc...) asparagine glycosylation sites follow: asparagine 464, asparagine 583, and asparagine 612.

It belongs to the peptidase M36 family. Zn(2+) is required as a cofactor.

Its subcellular location is the secreted. In terms of biological role, secreted metalloproteinase probably acting as a virulence factor. This Trichophyton equinum (Horse ringworm fungus) protein is Extracellular metalloproteinase 1 (MEP1).